The sequence spans 378 residues: MKIPEFKEYYQQLISTSSISSTDSSWDEGNAKVIHKLAQWCEDLGCEVEIEEIEKGKLNLLAKLGSGEGGLLLAGHTDTVPYDQGRWNYDPHTLTEANDRFYGLGTADMKGFFAFILEAIKNINWKDQSKPLYILATCDEETTMLGARHFASNTSIQPDYCIIGEPTNLMPIRGHKGHVANAVRVTGKSGHSSNPAYGVNALEIMNEIMFALMNLKNKLVKEYHNPGFSIPYPTLNLGHIHGGDSPNRICGCCELHYDVRPLPGISLDGLDNMLRDALKDVEEKWPGRIEITPLHEPIPGYECSADSPIVTSVAEICGQEVETVNYCTEAPFLQDLCPTLVLGPGSIEQAHQPDEFLAFSFIDPTINILSKLMYKHCF.

Histidine 76 provides a ligand contact to Zn(2+). Aspartate 78 is an active-site residue. Aspartate 108 serves as a coordination point for Zn(2+). Glutamate 140 is an active-site residue. Zn(2+) is bound by residues glutamate 141, glutamate 165, and histidine 351.

Belongs to the peptidase M20A family. ArgE subfamily. As to quaternary structure, homodimer. Zn(2+) serves as cofactor. Requires Co(2+) as cofactor. It depends on glutathione as a cofactor.

The protein localises to the cytoplasm. The catalysed reaction is N(2)-acetyl-L-ornithine + H2O = L-ornithine + acetate. The protein operates within amino-acid biosynthesis; L-arginine biosynthesis; L-ornithine from N(2)-acetyl-L-ornithine (linear): step 1/1. Functionally, catalyzes the hydrolysis of the amide bond of N(2)-acetylated L-amino acids. Cleaves the acetyl group from N-acetyl-L-ornithine to form L-ornithine, an intermediate in L-arginine biosynthesis pathway, and a branchpoint in the synthesis of polyamines. The chain is Acetylornithine deacetylase from Aliivibrio salmonicida (strain LFI1238) (Vibrio salmonicida (strain LFI1238)).